Here is a 199-residue protein sequence, read N- to C-terminus: Glycerol-3-phosphate acyltransferase (199 aa).

Transmembrane regions (helical) follow at residues 5–25 (VLTIVIIVGAYLAGSVSSAVL), 56–76 (SAALVLFCDMLKGAAPAYLAF), 83–103 (IALGVIAIAACLGHIFPIFFG), 118–138 (APIGHDLALCLLASWIVLVLV), and 141–161 (YSSFAAICTALLAPVYTWWLD).

It belongs to the PlsY family. In terms of assembly, probably interacts with PlsX.

It localises to the cell inner membrane. It catalyses the reaction an acyl phosphate + sn-glycerol 3-phosphate = a 1-acyl-sn-glycero-3-phosphate + phosphate. The protein operates within lipid metabolism; phospholipid metabolism. Its function is as follows. Catalyzes the transfer of an acyl group from acyl-phosphate (acyl-PO(4)) to glycerol-3-phosphate (G3P) to form lysophosphatidic acid (LPA). This enzyme utilizes acyl-phosphate as fatty acyl donor, but not acyl-CoA or acyl-ACP. The polypeptide is Glycerol-3-phosphate acyltransferase (Shewanella halifaxensis (strain HAW-EB4)).